A 244-amino-acid chain; its full sequence is 3-deoxy-manno-octulosonate cytidylyltransferase (244 aa).

The protein belongs to the KdsB family.

It is found in the cytoplasm. It catalyses the reaction 3-deoxy-alpha-D-manno-oct-2-ulosonate + CTP = CMP-3-deoxy-beta-D-manno-octulosonate + diphosphate. It participates in nucleotide-sugar biosynthesis; CMP-3-deoxy-D-manno-octulosonate biosynthesis; CMP-3-deoxy-D-manno-octulosonate from 3-deoxy-D-manno-octulosonate and CTP: step 1/1. It functions in the pathway bacterial outer membrane biogenesis; lipopolysaccharide biosynthesis. In terms of biological role, activates KDO (a required 8-carbon sugar) for incorporation into bacterial lipopolysaccharide in Gram-negative bacteria. This Wolinella succinogenes (strain ATCC 29543 / DSM 1740 / CCUG 13145 / JCM 31913 / LMG 7466 / NCTC 11488 / FDC 602W) (Vibrio succinogenes) protein is 3-deoxy-manno-octulosonate cytidylyltransferase.